The chain runs to 684 residues: Glycine--tRNA ligase beta subunit (684 aa).

The protein belongs to the class-II aminoacyl-tRNA synthetase family. Tetramer of two alpha and two beta subunits.

Its subcellular location is the cytoplasm. The catalysed reaction is tRNA(Gly) + glycine + ATP = glycyl-tRNA(Gly) + AMP + diphosphate. This Ectopseudomonas mendocina (strain ymp) (Pseudomonas mendocina) protein is Glycine--tRNA ligase beta subunit.